The primary structure comprises 149 residues: Probable flagellum biosynthesis repressor protein FlbT (149 aa).

The protein belongs to the FlbT family.

Has a post-transcriptional repressor function in flagellum biogenesis. Associates with the 5'-UTR of fljK mRNA and promotes its degradation. The sequence is that of Probable flagellum biosynthesis repressor protein FlbT from Rhizobium etli (strain CIAT 652).